We begin with the raw amino-acid sequence, 413 residues long: Putative ankyrin repeat protein L92 (413 aa).

ANK repeat units lie at residues 1–28 (MCAC…DINC), 32–67 (DGMS…DVNL), 68–104 (TVDG…LFES), 105–134 (DDDD…NIEA), 137–170 (DGET…KTNI), 174–208 (DRKT…NINY), 212–242 (IGET…NPNI), and 246–275 (SGNT…SPEI).

The sequence is that of Putative ankyrin repeat protein L92 from Acanthamoeba polyphaga mimivirus (APMV).